We begin with the raw amino-acid sequence, 226 residues long: MLRASFAGSPYVGVFARATDDVLLLRSDVDDDTADAMAAELDIPAVATTIGGSGTVGALATGNENGILVTSNVTMREKEAIETTASVSVTELPGRINAAGNVILANDYGAYVHPDLSTEAVESIESALNVPVARGKLADVRTVGTAAVATNRGVLCHPKAREPELEAIEDHLDVRADIGTVNYGAPLVGSGIVAGQTGYVVGEDTTGPELTRIEDTLGYLESITSE.

Belongs to the eIF-6 family.

Binds to the 50S ribosomal subunit and prevents its association with the 30S ribosomal subunit to form the 70S initiation complex. The protein is Translation initiation factor 6 of Haloquadratum walsbyi (strain DSM 16790 / HBSQ001).